The sequence spans 557 residues: Formate--tetrahydrofolate ligase (557 aa).

Thr66–Ser73 contacts ATP.

Belongs to the formate--tetrahydrofolate ligase family.

It catalyses the reaction (6S)-5,6,7,8-tetrahydrofolate + formate + ATP = (6R)-10-formyltetrahydrofolate + ADP + phosphate. The protein operates within one-carbon metabolism; tetrahydrofolate interconversion. The protein is Formate--tetrahydrofolate ligase of Clostridium botulinum (strain Kyoto / Type A2).